The chain runs to 503 residues: ATP-dependent RNA helicase dbp3 (503 aa).

The span at Met1–Glu25 shows a compositional bias: basic and acidic residues. The disordered stretch occupies residues Met1–Ala35. Positions Ser104 to Gln112 match the Q motif motif. Residues Trp116–Val292 enclose the Helicase ATP-binding domain. Ala129–Thr136 contacts ATP. A DEAD box motif is present at residues Asp239–Asp242. Residues Arg307–Gly472 form the Helicase C-terminal domain.

It belongs to the DEAD box helicase family. DDX5/DBP2 subfamily.

The protein localises to the nucleus. It localises to the nucleolus. The catalysed reaction is ATP + H2O = ADP + phosphate + H(+). In terms of biological role, ATP-dependent RNA helicase required for 60S ribosomal subunit synthesis. Involved in efficient pre-rRNA processing, predominantly at site A3, which is necessary for the normal formation of 25S and 5.8S rRNAs. This Neosartorya fischeri (strain ATCC 1020 / DSM 3700 / CBS 544.65 / FGSC A1164 / JCM 1740 / NRRL 181 / WB 181) (Aspergillus fischerianus) protein is ATP-dependent RNA helicase dbp3 (dbp3).